A 146-amino-acid polypeptide reads, in one-letter code: Large ribosomal subunit protein mL49 (146 aa).

A mitochondrion-targeting transit peptide spans 1–38 (MISSCVTRCFGRGKCLPGPATASIYQTIRCISTNSNKA).

Belongs to the mitochondrion-specific ribosomal protein mL49 family. As to quaternary structure, component of the mitochondrial large ribosomal subunit (mt-LSU). Mature yeast 74S mitochondrial ribosomes consist of a small (37S) and a large (54S) subunit. The 37S small subunit contains a 15S ribosomal RNA (15S mt-rRNA) and 34 different proteins. The 54S large subunit contains a 21S rRNA (21S mt-rRNA) and 46 different proteins.

The protein resides in the mitochondrion. Functionally, component of the mitochondrial ribosome (mitoribosome), a dedicated translation machinery responsible for the synthesis of mitochondrial genome-encoded proteins, including at least some of the essential transmembrane subunits of the mitochondrial respiratory chain. The mitoribosomes are attached to the mitochondrial inner membrane and translation products are cotranslationally integrated into the membrane. In Saccharomyces cerevisiae (strain ATCC 204508 / S288c) (Baker's yeast), this protein is Large ribosomal subunit protein mL49 (IMG2).